Consider the following 781-residue polypeptide: Poly(ADP-ribose) glycohydrolase 1 (781 aa).

Disordered regions lie at residues 28–87 (AHQV…VSEN), 102–131 (SLDN…NNKS), and 206–232 (ADST…DADS). A compositionally biased stretch (basic and acidic residues) spans 106-121 (VTERSEHTLDNHKSTE).

The protein belongs to the poly(ADP-ribose) glycohydrolase family. As to expression, expressed in head and tail neurons. Also detected in the central nerve cord and motor neurons.

It is found in the nucleus. The catalysed reaction is [(1''-&gt;2')-ADP-alpha-D-ribose](n) + H2O = [(1''-&gt;2')-ADP-alpha-D-ribose](n-1) + ADP-D-ribose. Poly(ADP-ribose) synthesized after DNA damage is only present transiently and is rapidly degraded by poly(ADP-ribose) glycohydrolase. Poly(ADP-ribose) metabolism may be required for maintenance of the normal function of neuronal cells. The sequence is that of Poly(ADP-ribose) glycohydrolase 1 from Caenorhabditis elegans.